Consider the following 120-residue polypeptide: Large ribosomal subunit protein uL18 (120 aa).

The disordered stretch occupies residues 1–25 (MKQTRTAARQSRHQRIRRKVKGTSD). Over residues 10–21 (QSRHQRIRRKVK) the composition is skewed to basic residues.

Belongs to the universal ribosomal protein uL18 family. In terms of assembly, part of the 50S ribosomal subunit; part of the 5S rRNA/L5/L18/L25 subcomplex. Contacts the 5S and 23S rRNAs.

Its function is as follows. This is one of the proteins that bind and probably mediate the attachment of the 5S RNA into the large ribosomal subunit, where it forms part of the central protuberance. The sequence is that of Large ribosomal subunit protein uL18 from Thermosynechococcus vestitus (strain NIES-2133 / IAM M-273 / BP-1).